We begin with the raw amino-acid sequence, 125 residues long: Small ribosomal subunit protein uS12 (125 aa).

A 3-methylthioaspartic acid modification is found at Asp-89. A disordered region spans residues 104-125 (LQGVKDRKQSRSKYGSKRPKKA). Positions 113 to 125 (SRSKYGSKRPKKA) are enriched in basic residues.

It belongs to the universal ribosomal protein uS12 family. Part of the 30S ribosomal subunit. Contacts proteins S8 and S17. May interact with IF1 in the 30S initiation complex.

With S4 and S5 plays an important role in translational accuracy. Functionally, interacts with and stabilizes bases of the 16S rRNA that are involved in tRNA selection in the A site and with the mRNA backbone. Located at the interface of the 30S and 50S subunits, it traverses the body of the 30S subunit contacting proteins on the other side and probably holding the rRNA structure together. The combined cluster of proteins S8, S12 and S17 appears to hold together the shoulder and platform of the 30S subunit. This is Small ribosomal subunit protein uS12 from Leptothrix cholodnii (strain ATCC 51168 / LMG 8142 / SP-6) (Leptothrix discophora (strain SP-6)).